Here is a 113-residue protein sequence, read N- to C-terminus: Large ribosomal subunit protein bL17 (113 aa).

It belongs to the bacterial ribosomal protein bL17 family. As to quaternary structure, part of the 50S ribosomal subunit. Contacts protein L32.

The chain is Large ribosomal subunit protein bL17 from Clostridium novyi (strain NT).